The following is a 237-amino-acid chain: Uridylate kinase (237 aa).

10-13 (KLSG) provides a ligand contact to ATP. G51 lines the UMP pocket. ATP is bound by residues G52 and R56. UMP contacts are provided by residues D71 and 132–139 (MGMPFFST). The ATP site is built by N160, Y166, and D169.

It belongs to the UMP kinase family. In terms of assembly, homohexamer.

Its subcellular location is the cytoplasm. It catalyses the reaction UMP + ATP = UDP + ADP. Its pathway is pyrimidine metabolism; CTP biosynthesis via de novo pathway; UDP from UMP (UMPK route): step 1/1. Its activity is regulated as follows. Inhibited by UTP. Catalyzes the reversible phosphorylation of UMP to UDP. In Nocardioides sp. (strain ATCC BAA-499 / JS614), this protein is Uridylate kinase.